Here is a 156-residue protein sequence, read N- to C-terminus: Small ribosomal subunit protein uS7 (156 aa).

It belongs to the universal ribosomal protein uS7 family. Part of the 30S ribosomal subunit. Contacts proteins S9 and S11.

In terms of biological role, one of the primary rRNA binding proteins, it binds directly to 16S rRNA where it nucleates assembly of the head domain of the 30S subunit. Is located at the subunit interface close to the decoding center, probably blocks exit of the E-site tRNA. This Shewanella baltica (strain OS223) protein is Small ribosomal subunit protein uS7.